A 363-amino-acid chain; its full sequence is Aminomethyltransferase (363 aa).

Belongs to the GcvT family. As to quaternary structure, the glycine cleavage system is composed of four proteins: P, T, L and H.

It carries out the reaction N(6)-[(R)-S(8)-aminomethyldihydrolipoyl]-L-lysyl-[protein] + (6S)-5,6,7,8-tetrahydrofolate = N(6)-[(R)-dihydrolipoyl]-L-lysyl-[protein] + (6R)-5,10-methylene-5,6,7,8-tetrahydrofolate + NH4(+). The glycine cleavage system catalyzes the degradation of glycine. This chain is Aminomethyltransferase, found in Teredinibacter turnerae (strain ATCC 39867 / T7901).